Here is a 247-residue protein sequence, read N- to C-terminus: 2,3-bisphosphoglycerate-dependent phosphoglycerate mutase (247 aa).

Substrate-binding positions include 8–15, 21–22, Arg60, 87–90, Lys98, 114–115, and 183–184; these read RHGESQWN, TG, ERHY, RR, and GN. The active-site Tele-phosphohistidine intermediate is His9. Glu87 acts as the Proton donor/acceptor in catalysis.

It belongs to the phosphoglycerate mutase family. BPG-dependent PGAM subfamily.

The enzyme catalyses (2R)-2-phosphoglycerate = (2R)-3-phosphoglycerate. Its pathway is carbohydrate degradation; glycolysis; pyruvate from D-glyceraldehyde 3-phosphate: step 3/5. Its function is as follows. Catalyzes the interconversion of 2-phosphoglycerate and 3-phosphoglycerate. The polypeptide is 2,3-bisphosphoglycerate-dependent phosphoglycerate mutase (Prosthecochloris aestuarii (strain DSM 271 / SK 413)).